We begin with the raw amino-acid sequence, 390 residues long: tRNA-specific 2-thiouridylase MnmA (390 aa).

Residues Ala20 to Ser27 and Leu46 contribute to the ATP site. Cys114 functions as the Nucleophile in the catalytic mechanism. The cysteines at positions 114 and 211 are disulfide-linked. An ATP-binding site is contributed by Gly138. Positions Arg161–Gln163 are interaction with tRNA. Cys211 acts as the Cysteine persulfide intermediate in catalysis.

Belongs to the MnmA/TRMU family.

It localises to the cytoplasm. The enzyme catalyses S-sulfanyl-L-cysteinyl-[protein] + uridine(34) in tRNA + AH2 + ATP = 2-thiouridine(34) in tRNA + L-cysteinyl-[protein] + A + AMP + diphosphate + H(+). Functionally, catalyzes the 2-thiolation of uridine at the wobble position (U34) of tRNA, leading to the formation of s(2)U34. This chain is tRNA-specific 2-thiouridylase MnmA, found in Azorhizobium caulinodans (strain ATCC 43989 / DSM 5975 / JCM 20966 / LMG 6465 / NBRC 14845 / NCIMB 13405 / ORS 571).